The sequence spans 314 residues: DNA-directed RNA polymerase subunit alpha (314 aa).

An alpha N-terminal domain (alpha-NTD) region spans residues 1-228 (MIEFEKPNIH…EHLGLFMDIS (228 aa)). The interval 242 to 314 (PVAASASDSA…DMNLGFRKED (73 aa)) is alpha C-terminal domain (alpha-CTD).

Belongs to the RNA polymerase alpha chain family. Homodimer. The RNAP catalytic core consists of 2 alpha, 1 beta, 1 beta' and 1 omega subunit. When a sigma factor is associated with the core the holoenzyme is formed, which can initiate transcription.

It catalyses the reaction RNA(n) + a ribonucleoside 5'-triphosphate = RNA(n+1) + diphosphate. In terms of biological role, DNA-dependent RNA polymerase catalyzes the transcription of DNA into RNA using the four ribonucleoside triphosphates as substrates. This chain is DNA-directed RNA polymerase subunit alpha, found in Leuconostoc mesenteroides subsp. mesenteroides (strain ATCC 8293 / DSM 20343 / BCRC 11652 / CCM 1803 / JCM 6124 / NCDO 523 / NBRC 100496 / NCIMB 8023 / NCTC 12954 / NRRL B-1118 / 37Y).